Reading from the N-terminus, the 126-residue chain is MTGEEAVVVTAVVAPKAGREEEQPPPPAGLGCGARGEPGRGPLEHGQQWKKFLYCEPHKRIKEVLEEERHIKRDECHIKNPAAVALEGIWSIKRNLPVGGLKPGLPSRNSLLPQAKYYSRHGGLRR.

A disordered region spans residues 13–45 (VAPKAGREEEQPPPPAGLGCGARGEPGRGPLEH).

The protein localises to the cytoplasm. It localises to the cytoskeleton. It is found in the cilium basal body. This is an uncharacterized protein from Homo sapiens (Human).